A 377-amino-acid polypeptide reads, in one-letter code: MSNGIVIIGSGFAARQLVKNIRKQDATIPLTLIAADSMDEYNKPDLSHVISQGQRADDLTRQTAGEFAEQFNLHLFPQTWVTDIDAEARVVKSQNNQWQYDKLVLATGASAFVPPVPGRELMLTLNSQQEYRACETQLRDARRVLIVGGGLIGSELAMDFCRAGKAVTLIDNAASILASLMPPEVSSRLQHRLTEMGVHLLLKSQLQGLEKTDSGILATLDHQRSIEVDAVIAATGLRPETALARRAGLTINRGVCVDSYLQTSNDDIYALGDYAEINGQVLPFLQPIQLSAMVLAKNLLGNNTPLKLPTMLVKIKTPELPLHLAGETQRQDLRWQINTERQGMVARGVDDADQLRAFVVSEDRMKEAFGLLKTLPM.

The protein belongs to the FAD-dependent oxidoreductase family. It depends on FAD as a cofactor.

Its subcellular location is the cytoplasm. The catalysed reaction is 2 reduced [nitric oxide reductase rubredoxin domain] + NAD(+) + H(+) = 2 oxidized [nitric oxide reductase rubredoxin domain] + NADH. Its pathway is nitrogen metabolism; nitric oxide reduction. One of at least two accessory proteins for anaerobic nitric oxide (NO) reductase. Reduces the rubredoxin moiety of NO reductase. The chain is Nitric oxide reductase FlRd-NAD(+) reductase from Shigella boydii serotype 18 (strain CDC 3083-94 / BS512).